Reading from the N-terminus, the 107-residue chain is Iron-binding protein IscA (107 aa).

Residues cysteine 35, cysteine 99, and cysteine 101 each contribute to the Fe cation site.

This sequence belongs to the HesB/IscA family. In terms of assembly, homodimer; may form tetramers and higher multimers. The cofactor is Fe cation.

Functionally, is able to transfer iron-sulfur clusters to apo-ferredoxin. Multiple cycles of [2Fe2S] cluster formation and transfer are observed, suggesting that IscA acts catalytically. Recruits intracellular free iron so as to provide iron for the assembly of transient iron-sulfur cluster in IscU in the presence of IscS, L-cysteine and the thioredoxin reductase system TrxA/TrxB. The sequence is that of Iron-binding protein IscA from Cronobacter sakazakii (strain ATCC BAA-894) (Enterobacter sakazakii).